A 489-amino-acid chain; its full sequence is Putative BTB/POZ domain-containing protein R773 (489 aa).

Residues 3–73 (SNIELVITDE…GNTSYKFQDK (71 aa)) form the BTB domain.

It belongs to the mimivirus BTB/WD family.

The chain is Putative BTB/POZ domain-containing protein R773 from Acanthamoeba polyphaga (Amoeba).